The sequence spans 315 residues: Ribosomal protein L11 methyltransferase (315 aa).

The S-adenosyl-L-methionine site is built by threonine 164, glycine 185, aspartate 207, and asparagine 249.

Belongs to the methyltransferase superfamily. PrmA family.

It is found in the cytoplasm. It carries out the reaction L-lysyl-[protein] + 3 S-adenosyl-L-methionine = N(6),N(6),N(6)-trimethyl-L-lysyl-[protein] + 3 S-adenosyl-L-homocysteine + 3 H(+). Its function is as follows. Methylates ribosomal protein L11. This Lactobacillus johnsonii (strain CNCM I-12250 / La1 / NCC 533) protein is Ribosomal protein L11 methyltransferase.